We begin with the raw amino-acid sequence, 260 residues long: Large ribosomal subunit protein eL8A (260 aa).

A disordered region spans residues 1-34 (MPSSKKVAPAPLATKSKASTSTKNPLFESTPKNF).

The protein belongs to the eukaryotic ribosomal protein eL8 family. In terms of assembly, component of the large ribosomal subunit. Mature ribosomes consist of a small (40S) and a large (60S) subunit. The 40S subunit contains about 32 different proteins and 1 molecule of RNA (18S). The 60S subunit contains 45 different proteins and 3 molecules of RNA (25S, 5.8S and 5S).

The protein localises to the cytoplasm. Its function is as follows. Component of the ribosome, a large ribonucleoprotein complex responsible for the synthesis of proteins in the cell. The small ribosomal subunit (SSU) binds messenger RNAs (mRNAs) and translates the encoded message by selecting cognate aminoacyl-transfer RNA (tRNA) molecules. The large subunit (LSU) contains the ribosomal catalytic site termed the peptidyl transferase center (PTC), which catalyzes the formation of peptide bonds, thereby polymerizing the amino acids delivered by tRNAs into a polypeptide chain. The nascent polypeptides leave the ribosome through a tunnel in the LSU and interact with protein factors that function in enzymatic processing, targeting, and the membrane insertion of nascent chains at the exit of the ribosomal tunnel. The polypeptide is Large ribosomal subunit protein eL8A (Candida albicans (strain SC5314 / ATCC MYA-2876) (Yeast)).